A 486-amino-acid polypeptide reads, in one-letter code: NADH-quinone oxidoreductase subunit N (486 aa).

14 helical membrane-spanning segments follow: residues 8–28, 36–56, 74–94, 104–124, 125–145, 160–180, 204–224, 239–259, 270–290, 298–318, 329–349, 374–394, 407–427, and 459–479; these read LIAL…ILSI, FIAF…YFLI, ILYI…AYPW, EFYL…ISNH, MASL…LIAY, LVLS…IYAI, VLFG…MVPF, VLSF…LYFF, IFLI…LMAI, FFGY…LVSK, GIFL…INLF, ASIV…LGFF, HLWT…YGYL, and ILIF…NPLI.

Belongs to the complex I subunit 2 family. As to quaternary structure, NDH-1 is composed of 13 different subunits. Subunits NuoA, H, J, K, L, M, N constitute the membrane sector of the complex.

It is found in the cell membrane. It carries out the reaction a quinone + NADH + 5 H(+)(in) = a quinol + NAD(+) + 4 H(+)(out). In terms of biological role, NDH-1 shuttles electrons from NADH, via FMN and iron-sulfur (Fe-S) centers, to quinones in the respiratory chain. The immediate electron acceptor for the enzyme in this species is believed to be ubiquinone. Couples the redox reaction to proton translocation (for every two electrons transferred, four hydrogen ions are translocated across the cytoplasmic membrane), and thus conserves the redox energy in a proton gradient. This Buchnera aphidicola subsp. Schizaphis graminum (strain Sg) protein is NADH-quinone oxidoreductase subunit N.